A 2123-amino-acid polypeptide reads, in one-letter code: Toxin Afp18 (2123 aa).

Residues 864 to 919 are disordered; it reads FFDNSDQDADQPRVRRKREMTDEIMLSDGSSRSEAKALPDENELDTDQSKSRPESA. Residues 1771 to 2123 are tyrosine glycosyltransferase; the sequence is VFDSANTNRS…GNSTQSSGLS (353 aa). UDP-N-acetyl-alpha-D-glucosamine is bound by residues 1850-1852 and 1940-1941; these read IWV and SD. 2 residues coordinate a divalent metal cation: D1957 and D1959. Residues 1957–1960 carry the DxDD motif motif; it reads DIDD. Residue N1993 participates in UDP-N-acetyl-alpha-D-glucosamine binding.

It depends on a divalent metal cation as a cofactor.

It localises to the secreted. Its subcellular location is the host cell membrane. The catalysed reaction is L-tyrosyl-[protein] + UDP-N-acetyl-alpha-D-glucosamine = O-(N-acetyl-alpha-D-glucosaminyl)-L-tyrosyl-[protein] + UDP + H(+). Functionally, toxin component of the prophage tail-derived protein translocation system Afp, which is the causative agent of enteric redmouth disease in salmonid fish species. Mono-O-GlcNAcylates the small GTPase RhoA in eukaryotic host cells at Tyr-34, using UDP-N-acetylglucosamine (UDP-GlcNAc) as the sugar donor. Glycosylation of RhoA results in impaired effector and regulator interaction and inactivation of downstream RhoA signaling which leads to actin filament depolymerization and blocks cytokinesis and gastrulation during zebrafish embryo development. To a lesser extent, is also able to glycosylate other Rho family GTPases (RhoB, RhoC, Rac1, Rac2, Rac3, and Cdc42) in vitro at a switch I tyrosine residue, but not Ras proteins. The polypeptide is Toxin Afp18 (Yersinia ruckeri serotype O1 (strain ATCC 29473 / DSM 18506 / JCM 15110 / CCUG 14190 / NCIMB 2194 / NCTC 12986 / 2396-61)).